A 178-amino-acid polypeptide reads, in one-letter code: Disulfide bond formation protein B (178 aa).

Residues 1–16 (MTIFSSLNQFSKGHVS) are Cytoplasmic-facing. A helical transmembrane segment spans residues 17-33 (WLLLLLFIIFFEACALY). Over 34–51 (FQHVMMLAPCVMCIYERV) the chain is Periplasmic. An intrachain disulfide couples Cys-43 to Cys-46. The chain crosses the membrane as a helical span at residues 52–67 (AMMGIGGAAIIGLIAP). Residues 68–74 (NNALFRW) are Cytoplasmic-facing. The chain crosses the membrane as a helical span at residues 75-92 (LGLIGWGLSSYKGLMLAM). At 93–147 (QHVDYQFNPSPFATCDLFVTFPSWAPLNQWVPWMFEAYGDCSKIVWQFFDLSMPQ) the chain is on the periplasmic side. An intrachain disulfide couples Cys-107 to Cys-133. Residues 148 to 166 (WLVVIFAGNLVALALIVIA) form a helical membrane-spanning segment. The Cytoplasmic segment spans residues 167-178 (QFFPVKRKNPIR).

This sequence belongs to the DsbB family.

It is found in the cell inner membrane. In terms of biological role, required for disulfide bond formation in some periplasmic proteins. Acts by oxidizing the DsbA protein. The sequence is that of Disulfide bond formation protein B from Vibrio parahaemolyticus serotype O3:K6 (strain RIMD 2210633).